A 370-amino-acid polypeptide reads, in one-letter code: Nematocyst expressed protein 4 (370 aa).

An N-terminal signal peptide occupies residues 1–19 (MAWTLVLLVLLGTSSCLDA). Positions 34-55 (SGSGSGEEGSSGSGSAPEPVRD) are disordered. Positions 36 to 45 (SGSGEEGSSG) are enriched in gly residues. ShKT domains are found at residues 70-102 (CLDK…CRFC), 113-149 (CTDA…CKLC), and 155-190 (GKKF…CEVH). Disulfide bonds link Cys-70–Cys-102, Cys-77–Cys-95, Cys-84–Cys-99, Cys-113–Cys-149, Cys-121–Cys-142, Cys-131–Cys-146, Cys-164–Cys-183, and Cys-173–Cys-187. The segment covering 306–340 (PYPPPPPPYPEQVPPPPPPPPPPPPPPPYPYPYPY) has biased composition (pro residues). Residues 306–370 (PYPPPPPPYP…HHKENHSKKS (65 aa)) are disordered. A compositionally biased stretch (basic residues) spans 349-370 (HKSKKHAKHHEKHHKENHSKKS).

It belongs to the NEP3 family. In terms of tissue distribution, nematocytes. In late planulae, transcripts are found throughout the ectoderm in nematocytes, with high concentration of expressing cells in the oral pole. In primary polyps, is expressed in nematocytes in the body wall and physa ectoderm and in the upper and lower pharynx.

Its subcellular location is the nematocyst. It localises to the secreted. The polypeptide is Nematocyst expressed protein 4 (Nematostella vectensis (Starlet sea anemone)).